The sequence spans 215 residues: Adenylate kinase (215 aa).

Residue 10 to 15 participates in ATP binding; sequence GAGKGT. The interval 30–59 is NMP; that stretch reads STGDMFRLAIKEGTELGKKAKEFMDQGDLV. Residues threonine 31, arginine 36, 57-59, 85-88, and glutamine 92 contribute to the AMP site; these read DLV and GFPR. An LID region spans residues 126-163; that stretch reads GRRICPTCGTAYHVVYNPPKEEGICDKDGSQLIQRDDD. ATP is bound at residue arginine 127. Cysteine 130, cysteine 133, cysteine 150, and aspartate 153 together coordinate Zn(2+). AMP-binding residues include arginine 160 and arginine 171. ATP is bound at residue arginine 199.

It belongs to the adenylate kinase family. Monomer.

It localises to the cytoplasm. It carries out the reaction AMP + ATP = 2 ADP. The protein operates within purine metabolism; AMP biosynthesis via salvage pathway; AMP from ADP: step 1/1. In terms of biological role, catalyzes the reversible transfer of the terminal phosphate group between ATP and AMP. Plays an important role in cellular energy homeostasis and in adenine nucleotide metabolism. This is Adenylate kinase from Oceanobacillus iheyensis (strain DSM 14371 / CIP 107618 / JCM 11309 / KCTC 3954 / HTE831).